Reading from the N-terminus, the 150-residue chain is uncharacterized protein (150 aa).

Positions 5–66 (LDKVDRRLLE…KPNYKKLNLG (62 aa)) constitute an HTH asnC-type domain. Positions 24 to 43 (IATLSKKLGIPRTTVHYRIK) form a DNA-binding region, H-T-H motif.

This is an uncharacterized protein from Pyrococcus abyssi (strain GE5 / Orsay).